Reading from the N-terminus, the 475-residue chain is Ribosomal protein uS12 methylthiotransferase RimO (475 aa).

Positions asparagine 36 to lysine 150 constitute an MTTase N-terminal domain. Residues cysteine 45, cysteine 81, cysteine 113, cysteine 185, cysteine 189, and cysteine 192 each contribute to the [4Fe-4S] cluster site. In terms of domain architecture, Radical SAM core spans serine 171–lysine 403. The 70-residue stretch at lysine 406–isoleucine 475 folds into the TRAM domain.

This sequence belongs to the methylthiotransferase family. RimO subfamily. Requires [4Fe-4S] cluster as cofactor.

The protein resides in the cytoplasm. It catalyses the reaction L-aspartate(89)-[ribosomal protein uS12]-hydrogen + (sulfur carrier)-SH + AH2 + 2 S-adenosyl-L-methionine = 3-methylsulfanyl-L-aspartate(89)-[ribosomal protein uS12]-hydrogen + (sulfur carrier)-H + 5'-deoxyadenosine + L-methionine + A + S-adenosyl-L-homocysteine + 2 H(+). Catalyzes the methylthiolation of an aspartic acid residue of ribosomal protein uS12. The sequence is that of Ribosomal protein uS12 methylthiotransferase RimO from Protochlamydia amoebophila (strain UWE25).